We begin with the raw amino-acid sequence, 628 residues long: Patulin synthase (628 aa).

The signal sequence occupies residues 1–20 (MRPIPSILGALGAFATLSAA). The N-linked (GlcNAc...) asparagine glycan is linked to N48. FAD-binding positions include 60–61 (TA) and 81–82 (EA). The N-linked (GlcNAc...) asparagine glycan is linked to N92. 147–150 (NYMA) serves as a coordination point for FAD. Residues N197, N260, N386, N429, and N486 are each glycosylated (N-linked (GlcNAc...) asparagine). The Proton acceptor role is filled by H564. FAD contacts are provided by residues A598 and 609–610 (PQ).

The protein belongs to the GMC oxidoreductase family. In terms of assembly, homodimer. Requires FAD as cofactor.

It is found in the cytoplasm. It localises to the cell cortex. The protein resides in the vacuole. The protein localises to the secreted. Its subcellular location is the cell wall. It carries out the reaction (E)-ascladiol + A = patulin + AH2. It participates in mycotoxin biosynthesis; patulin biosynthesis. In terms of biological role, patulin synthase; part of the gene cluster that mediates the biosynthesis of patulin, an acetate-derived tetraketide mycotoxin produced by several fungal species that shows antimicrobial properties against several bacteria. PatE catalyzes the last step of the pathway which is the conversion of E-ascladiol to patulin. The pathway begins with the synthesis of 6-methylsalicylic acid by the polyketide synthase (PKS) patK via condensation of acetate and malonate units. The 6-methylsalicylic acid decarboxylase patG then catalyzes the decarboxylation of 6-methylsalicylic acid to yield m-cresol (also known as 3-methylphenol). These first reactions occur in the cytosol. The intermediate m-cresol is then transported into the endoplasmic reticulum where the cytochrome P450 monooxygenase patH converts it to m-hydroxybenzyl alcohol, which is further converted to gentisyl alcohol by the cytochrome P450 monooxygenase patI. The oxidoreductases patJ and patO further convert gentisyl alcohol to isoepoxydon in the vacuole. PatN catalyzes then the transformation of isoepoxydon into phyllostine. The cluster protein patF is responsible for the conversion from phyllostine to neopatulin whereas the alcohol dehydrogenase patD converts neopatulin to E-ascladiol. The steps between isoepoxydon and E-ascladiol occur in the cytosol, and E-ascladiol is probably secreted to the extracellular space by one of the cluster-specific transporters patC or patM. Finally, the secreted patulin synthase patE catalyzes the conversion of E-ascladiol to patulin. The polypeptide is Patulin synthase (Aspergillus clavatus (strain ATCC 1007 / CBS 513.65 / DSM 816 / NCTC 3887 / NRRL 1 / QM 1276 / 107)).